The chain runs to 192 residues: Peptidyl-tRNA hydrolase (192 aa).

Tyr18 provides a ligand contact to tRNA. His23 (proton acceptor) is an active-site residue. Positions 69, 71, and 117 each coordinate tRNA.

The protein belongs to the PTH family. As to quaternary structure, monomer.

It is found in the cytoplasm. The catalysed reaction is an N-acyl-L-alpha-aminoacyl-tRNA + H2O = an N-acyl-L-amino acid + a tRNA + H(+). In terms of biological role, hydrolyzes ribosome-free peptidyl-tRNAs (with 1 or more amino acids incorporated), which drop off the ribosome during protein synthesis, or as a result of ribosome stalling. Functionally, catalyzes the release of premature peptidyl moieties from peptidyl-tRNA molecules trapped in stalled 50S ribosomal subunits, and thus maintains levels of free tRNAs and 50S ribosomes. This Neisseria meningitidis serogroup A / serotype 4A (strain DSM 15465 / Z2491) protein is Peptidyl-tRNA hydrolase.